The primary structure comprises 77 residues: Acyl carrier protein (77 aa).

The Carrier domain occupies 1–76 (MATFDDVKAV…DVVNYIDNLK (76 aa)). Residue S36 is modified to O-(pantetheine 4'-phosphoryl)serine.

The protein belongs to the acyl carrier protein (ACP) family. Post-translationally, 4'-phosphopantetheine is transferred from CoA to a specific serine of apo-ACP by AcpS. This modification is essential for activity because fatty acids are bound in thioester linkage to the sulfhydryl of the prosthetic group.

Its subcellular location is the cytoplasm. The protein operates within lipid metabolism; fatty acid biosynthesis. Carrier of the growing fatty acid chain in fatty acid biosynthesis. In Campylobacter jejuni subsp. doylei (strain ATCC BAA-1458 / RM4099 / 269.97), this protein is Acyl carrier protein.